The following is a 302-amino-acid chain: Recombination-associated protein RdgC (302 aa).

This sequence belongs to the RdgC family.

Its subcellular location is the cytoplasm. The protein localises to the nucleoid. Its function is as follows. May be involved in recombination. The protein is Recombination-associated protein RdgC of Xanthomonas campestris pv. campestris (strain 8004).